The following is a 376-amino-acid chain: Protein insensitive (376 aa).

Residues 50 to 79 (QVEVENRALRDKVRYLEAKLQQHKDLLSQI) adopt a coiled-coil conformation. Residues 258–356 (GPNNTCVPAS…TKCADENKMM (99 aa)) enclose the BEN domain.

In terms of assembly, homodimer. Interacts (via BEN domain) with Su(H). Interacts with Cp190.

The protein localises to the nucleus. Functionally, can act as both a transcriptional repressor and corepressor. Represses the expression of genes involved in neural development and preferentially binds palindromic sequence 5'-CCAATTGG-3' to mediate transcriptional repression. Acts as a corepressor for suppressor of hairless (Su(H)) and inhibits Notch signaling during peripheral nervous system development. In Drosophila melanogaster (Fruit fly), this protein is Protein insensitive (insv).